The primary structure comprises 21 residues: 5-methyltetrahydropteroyltriglutamate--homocysteine methyltransferase (21 aa).

This sequence belongs to the vitamin-B12 independent methionine synthase family. Requires Zn(2+) as cofactor.

The protein localises to the cytoplasm. The enzyme catalyses 5-methyltetrahydropteroyltri-L-glutamate + L-homocysteine = tetrahydropteroyltri-L-glutamate + L-methionine. The protein operates within amino-acid biosynthesis; L-methionine biosynthesis via de novo pathway; L-methionine from L-homocysteine (MetE route): step 1/1. Catalyzes the transfer of a methyl group from 5-methyltetrahydrofolate to homocysteine resulting in methionine formation. This chain is 5-methyltetrahydropteroyltriglutamate--homocysteine methyltransferase, found in Populus euphratica (Euphrates poplar).